Consider the following 849-residue polypeptide: A-kinase anchor protein 4 (849 aa).

A propeptide spanning residues 1–188 (MIAYCGTTTM…MAASKNTNNN (188 aa)) is cleaved from the precursor. S96, S130, S190, and S204 each carry phosphoserine. Polar residues predominate over residues 183 to 205 (KNTNNNQSPSNPATKSPSNQRSV). The interval 183-210 (KNTNNNQSPSNPATKSPSNQRSVATPEG) is disordered. A Phosphothreonine modification is found at T207. Residues S213, S226, and S271 each carry the phosphoserine modification. A PKA-RI and PKA-RII subunit binding domain region spans residues 219–232 (FYVNRLSSLVIQMA). Phosphotyrosine is present on Y301. Residues S302, S341, S431, S442, S444, S463, S492, S497, and S504 each carry the phosphoserine modification. The segment at 335–344 (YANQVASDMM) is PKA-RI-alpha subunit binding domain. T506 bears the Phosphothreonine mark. Residue S538 is modified to Phosphoserine. S583 is modified (phosphoserine; by STK33). A phosphoserine mark is found at S628, S633, S652, and S702.

The protein belongs to the AKAP110 family. In terms of assembly, interacts with PRKAR1A and PRKAR2A. Interacts with ENO4. Interacts with QRICH2. Phosphorylated by STK33 during sperm flagella assembly. In terms of tissue distribution, expressed in the fibrous sheath of spermatozoa (at protein level). Expressed in step 1 to step 6 spermatids, abundance then increases during steps 8 to 12, abundance decreases thereafter.

It is found in the cell projection. It localises to the cilium. The protein resides in the flagellum. Major structural component of sperm fibrous sheath. Plays a role in sperm motility. The polypeptide is A-kinase anchor protein 4 (Mus musculus (Mouse)).